Here is a 454-residue protein sequence, read N- to C-terminus: tRNA modification GTPase MnmE (454 aa).

(6S)-5-formyl-5,6,7,8-tetrahydrofolate is bound by residues Arg23, Glu80, and Lys120. The 162-residue stretch at 216 to 377 folds into the TrmE-type G domain; it reads GMKVVIAGRP…LRNHLKQSMG (162 aa). Asn226 provides a ligand contact to K(+). Residues 226 to 231, 245 to 251, 270 to 273, 335 to 338, and 358 to 360 contribute to the GTP site; these read NAGKSS, TDIAGTT, DTAG, NKAD, and SAR. Residue Ser230 participates in Mg(2+) binding. Residues Thr245, Ile247, and Thr250 each contribute to the K(+) site. Thr251 provides a ligand contact to Mg(2+). Lys454 is a binding site for (6S)-5-formyl-5,6,7,8-tetrahydrofolate.

It belongs to the TRAFAC class TrmE-Era-EngA-EngB-Septin-like GTPase superfamily. TrmE GTPase family. As to quaternary structure, homodimer. Heterotetramer of two MnmE and two MnmG subunits. The cofactor is K(+).

The protein localises to the cytoplasm. Exhibits a very high intrinsic GTPase hydrolysis rate. Involved in the addition of a carboxymethylaminomethyl (cmnm) group at the wobble position (U34) of certain tRNAs, forming tRNA-cmnm(5)s(2)U34. This Escherichia coli O139:H28 (strain E24377A / ETEC) protein is tRNA modification GTPase MnmE.